We begin with the raw amino-acid sequence, 221 residues long: Thiamine-phosphate synthase (221 aa).

4-amino-2-methyl-5-(diphosphooxymethyl)pyrimidine-binding positions include 44–48 and Asn79; that span reads QFREK. Mg(2+) is bound by residues Asp80 and Asp99. Ser117 is a binding site for 4-amino-2-methyl-5-(diphosphooxymethyl)pyrimidine. Position 143–145 (143–145) interacts with 2-[(2R,5Z)-2-carboxy-4-methylthiazol-5(2H)-ylidene]ethyl phosphate; sequence TSS. Position 146 (Lys146) interacts with 4-amino-2-methyl-5-(diphosphooxymethyl)pyrimidine. 2-[(2R,5Z)-2-carboxy-4-methylthiazol-5(2H)-ylidene]ethyl phosphate-binding positions include Gly175 and 195-196; that span reads IS.

This sequence belongs to the thiamine-phosphate synthase family. Requires Mg(2+) as cofactor.

The enzyme catalyses 2-[(2R,5Z)-2-carboxy-4-methylthiazol-5(2H)-ylidene]ethyl phosphate + 4-amino-2-methyl-5-(diphosphooxymethyl)pyrimidine + 2 H(+) = thiamine phosphate + CO2 + diphosphate. It carries out the reaction 2-(2-carboxy-4-methylthiazol-5-yl)ethyl phosphate + 4-amino-2-methyl-5-(diphosphooxymethyl)pyrimidine + 2 H(+) = thiamine phosphate + CO2 + diphosphate. The catalysed reaction is 4-methyl-5-(2-phosphooxyethyl)-thiazole + 4-amino-2-methyl-5-(diphosphooxymethyl)pyrimidine + H(+) = thiamine phosphate + diphosphate. Its pathway is cofactor biosynthesis; thiamine diphosphate biosynthesis; thiamine phosphate from 4-amino-2-methyl-5-diphosphomethylpyrimidine and 4-methyl-5-(2-phosphoethyl)-thiazole: step 1/1. In terms of biological role, condenses 4-methyl-5-(beta-hydroxyethyl)thiazole monophosphate (THZ-P) and 2-methyl-4-amino-5-hydroxymethyl pyrimidine pyrophosphate (HMP-PP) to form thiamine monophosphate (TMP). This Geobacillus kaustophilus (strain HTA426) protein is Thiamine-phosphate synthase.